The sequence spans 248 residues: HTH-type transcriptional regulator GgaR (248 aa).

Residues 22 to 90 (TPLYIKFAET…RGYGTQINNI (69 aa)) enclose the HTH gntR-type domain. Residues 50–69 (ERDLSQLTGVSRITVRKAMQ) constitute a DNA-binding region (H-T-H motif).

With respect to regulation, senses ADP-glucose (ADPG), which is the substrate for glycogen elongation, as an effector. In the presence of ADPG, GgaR becomes inactive and derepresses the yegTUV operon, leading to glycogen accumulation. In contrast, in the absence of glucose, the concentration of ADPG decreases, GgaR becomes active, and glycogen accumulation is repressed. Functionally, transcriptional regulator that regulates glycogen accumulation in response to the amount of glucose available to the cell. Acts as a repressor of the yegTUV operon, which may be involved in glycogen accumulation. The sequence is that of HTH-type transcriptional regulator GgaR from Escherichia coli O6:H1 (strain CFT073 / ATCC 700928 / UPEC).